A 2269-amino-acid polypeptide reads, in one-letter code: Anaphase-promoting complex subunit 1 (2269 aa).

Disordered regions lie at residues 305–334 (PSSN…QTIN), 379–433 (SSPP…QENS), 609–644 (NNNN…RKPL), 804–845 (KVYP…NNNN), and 1136–1197 (STAS…NSTS). Low complexity-rich tracts occupy residues 306–334 (SSNA…QTIN), 379–430 (SSPP…QQQQ), 609–638 (NNNN…NNNN), 809–845 (NNNN…NNNN), and 1136–1159 (STAS…GQSN). Positions 1160-1177 (GLPMNSTTNQMNSHQINN) are enriched in polar residues. PC repeat units follow at residues 1440–1472 (AALM…PIND) and 1483–1520 (TAGM…ISKE). The interval 1535 to 1586 (STPSISSNRNNNDLFNNGSNNNSSSNGGGGGGGGNNNGNNSNNGNNGSSQFK) is disordered. Over residues 1540 to 1559 (SSNRNNNDLFNNGSNNNSSS) the composition is skewed to low complexity. Positions 1560–1570 (NGGGGGGGGNN) are enriched in gly residues. The segment covering 1571-1583 (NGNNSNNGNNGSS) has biased composition (low complexity). 3 PC repeats span residues 1605–1637 (GAII…GLNY), 1722–1756 (GAAF…RQVY), and 1792–1807 (LVMA…KILR). Low complexity predominate over residues 1960–1993 (NNNNNNNNNNNNNNNNNNNNNNNNNNNNNNNNNN). Positions 1960–1997 (NNNNNNNNNNNNNNNNNNNNNNNNNNNNNNNNNNKNIL) are disordered.

This sequence belongs to the APC1 family. In terms of assembly, the APC/C is composed of at least 13 subunits that stay tightly associated throughout the cell cycle: anapc1, anapc2, anapc3, anapc4, anapc5, anapc6, anapc7, anapc8, anapc10, anapc11, cdc20, cdc26 and cdh1.

It localises to the nucleus. Its pathway is protein modification; protein ubiquitination. In terms of biological role, component of the anaphase promoting complex/cyclosome (APC/C), a cell cycle-regulated E3 ubiquitin-protein ligase complex that controls progression through mitosis and the G1 phase of the cell cycle. In Dictyostelium discoideum (Social amoeba), this protein is Anaphase-promoting complex subunit 1 (anapc1).